We begin with the raw amino-acid sequence, 146 residues long: Hemoglobin subunit delta (146 aa).

Residues 2–146 (HLTGEEKSAV…VATALAHKYH (145 aa)) form the Globin domain. Residue Ser-50 is modified to Phosphoserine. Residues His-63 and His-92 each coordinate heme b.

This sequence belongs to the globin family. As to quaternary structure, heterotetramer of two delta chains and two alpha chains. In terms of tissue distribution, red blood cells.

This is Hemoglobin subunit delta (HBD) from Leontocebus nigricollis (Black-mantled tamarin).